Consider the following 354-residue polypeptide: Uroporphyrinogen decarboxylase (354 aa).

Residues 27 to 31 (RQAGR), Asp77, Tyr154, Thr209, and His327 contribute to the substrate site.

The protein belongs to the uroporphyrinogen decarboxylase family. In terms of assembly, homodimer.

Its subcellular location is the cytoplasm. The enzyme catalyses uroporphyrinogen III + 4 H(+) = coproporphyrinogen III + 4 CO2. The protein operates within porphyrin-containing compound metabolism; protoporphyrin-IX biosynthesis; coproporphyrinogen-III from 5-aminolevulinate: step 4/4. Functionally, catalyzes the decarboxylation of four acetate groups of uroporphyrinogen-III to yield coproporphyrinogen-III. This chain is Uroporphyrinogen decarboxylase, found in Shigella flexneri serotype 5b (strain 8401).